The sequence spans 351 residues: MSGIVTYGSYIPRYRIRPEEIARVWGEDPEKMKNGIFILSKSVPGPDEDVATISVEAARNALKRSNIDPNDIGAIYIGSESHPYAVKPTATIVAAAIGMPFRTFAADYEFACKAGTAAMQNIKAMVDSNMIKYGMAIGSDTSQGAPGDALEYTASAGGTAMVIGRDNVIAEINKTISVATDTPDFWRREGEPYPKHGERFTGEPGYFKHVIGAARDIMSELNTKPDDYDYVVFHQPNGKFPTRAAKILGFREEQYREGLITPYIGNTYSGSTMTGLSAILDVSRPGDRILAVSFGSGAGSDAFDITVTDNILDYHRENAPGVRKMMESTEYIDYAVYSKFRKILVFGDNLE.

Asp28 is a (3S)-3-hydroxy-3-methylglutaryl-CoA binding site. Glu80 (proton donor/acceptor) is an active-site residue. 2 residues coordinate (3S)-3-hydroxy-3-methylglutaryl-CoA: Cys112 and Thr153. Catalysis depends on Cys112, which acts as the Acyl-thioester intermediate. Residue Arg199 coordinates CoA. 2 residues coordinate (3S)-3-hydroxy-3-methylglutaryl-CoA: Thr201 and His234. Catalysis depends on His234, which acts as the Proton donor/acceptor. Lys239 contributes to the CoA binding site. 3 residues coordinate (3S)-3-hydroxy-3-methylglutaryl-CoA: Arg243, Asn266, and Ser296.

Belongs to the thiolase-like superfamily. Archaeal HMG-CoA synthase family. Interacts with acetoacetyl-CoA thiolase that catalyzes the precedent step in the pathway and with a DUF35 protein. The acetoacetyl-CoA thiolase/HMG-CoA synthase complex channels the intermediate via a fused CoA-binding site, which allows for efficient coupling of the endergonic thiolase reaction with the exergonic HMGCS reaction.

It carries out the reaction acetoacetyl-CoA + acetyl-CoA + H2O = (3S)-3-hydroxy-3-methylglutaryl-CoA + CoA + H(+). Its pathway is metabolic intermediate biosynthesis; (R)-mevalonate biosynthesis; (R)-mevalonate from acetyl-CoA: step 2/3. Catalyzes the condensation of acetyl-CoA with acetoacetyl-CoA to form 3-hydroxy-3-methylglutaryl-CoA (HMG-CoA). Functions in the mevalonate (MVA) pathway leading to isopentenyl diphosphate (IPP), a key precursor for the biosynthesis of isoprenoid compounds that are building blocks of archaeal membrane lipids. This Picrophilus torridus (strain ATCC 700027 / DSM 9790 / JCM 10055 / NBRC 100828 / KAW 2/3) protein is Hydroxymethylglutaryl-CoA synthase.